Reading from the N-terminus, the 162-residue chain is Cytochrome c-type biogenesis protein CcmE (162 aa).

Residues 1-8 are Cytoplasmic-facing; it reads MNPRRKKR. Residues 9–29 form a helical; Signal-anchor for type II membrane protein membrane-spanning segment; sequence LTLAVALIGGVAAIASLLLYA. The Periplasmic portion of the chain corresponds to 30 to 162; sequence LNSNLNLFYT…YSQQKAPDTK (133 aa). Heme is bound by residues histidine 131 and tyrosine 135. The disordered stretch occupies residues 139–162; it reads EVAEAMGQKHEKLDYSQQKAPDTK. Polar residues predominate over residues 153 to 162; that stretch reads YSQQKAPDTK.

Belongs to the CcmE/CycJ family.

It localises to the cell inner membrane. Functionally, heme chaperone required for the biogenesis of c-type cytochromes. Transiently binds heme delivered by CcmC and transfers the heme to apo-cytochromes in a process facilitated by CcmF and CcmH. This is Cytochrome c-type biogenesis protein CcmE from Shewanella putrefaciens (strain CN-32 / ATCC BAA-453).